The following is a 668-amino-acid chain: Fe(2+) transporter FeoB (668 aa).

The 163-residue stretch at 3–165 (SYEIALIGNP…KKAISIAVKD (163 aa)) folds into the FeoB-type G domain. 10 to 17 (GNPNVGKS) contributes to the GTP binding site. Residues asparagine 21, alanine 22, threonine 24, and glycine 25 each coordinate Mg(2+). Residues 35–39 (GVTVE), 56–59 (DLPG), 116–119 (NKMD), and 145–147 (SAA) contribute to the GTP site. 8 helical membrane passes run 344–364 (VGAVLVFFPILAFLFFAISFL), 386–406 (LPGKAVISMVMGFGCNVPAIM), 418–438 (ILTILINPLLSCSARLPIYAL), 450–470 (VVILSMYALGVVLALITAFLF), 515–535 (IIVFGVILVWVLSVYGPSGYL), 574–594 (ALVFGIIAKEVVVGSLAMLYG), 613–633 (AYAFMAFSLIYLPCIATLAVI), and 643–663 (LFAVTYEMILAYVVALVISVI).

The protein belongs to the TRAFAC class TrmE-Era-EngA-EngB-Septin-like GTPase superfamily. FeoB GTPase (TC 9.A.8) family. In terms of assembly, the crystallized N-terminal domain is a homodimer.

It is found in the cell membrane. Its function is as follows. Probable transporter of a GTP-driven Fe(2+) uptake system, might be able to transport Fe(2+) into or out of the cell. The chain is Fe(2+) transporter FeoB from Methanocaldococcus jannaschii (strain ATCC 43067 / DSM 2661 / JAL-1 / JCM 10045 / NBRC 100440) (Methanococcus jannaschii).